We begin with the raw amino-acid sequence, 337 residues long: Ketol-acid reductoisomerase (NADP(+)) (337 aa).

Positions 3 to 183 (VEMFYDADAD…GGARAGVIKT (181 aa)) constitute a KARI N-terminal Rossmann domain. Residues 26–29 (YGSQ), lysine 49, serine 52, serine 54, and 84–87 (DTAQ) each bind NADP(+). The active site involves histidine 109. Glycine 135 contacts NADP(+). The KARI C-terminal knotted domain maps to 184–329 (TFKDETETDL…KKLRDLMSWV (146 aa)). Aspartate 192, glutamate 196, glutamate 228, and glutamate 232 together coordinate Mg(2+). Serine 253 contacts substrate.

It belongs to the ketol-acid reductoisomerase family. Mg(2+) serves as cofactor.

It carries out the reaction (2R)-2,3-dihydroxy-3-methylbutanoate + NADP(+) = (2S)-2-acetolactate + NADPH + H(+). The catalysed reaction is (2R,3R)-2,3-dihydroxy-3-methylpentanoate + NADP(+) = (S)-2-ethyl-2-hydroxy-3-oxobutanoate + NADPH + H(+). It functions in the pathway amino-acid biosynthesis; L-isoleucine biosynthesis; L-isoleucine from 2-oxobutanoate: step 2/4. The protein operates within amino-acid biosynthesis; L-valine biosynthesis; L-valine from pyruvate: step 2/4. Functionally, involved in the biosynthesis of branched-chain amino acids (BCAA). Catalyzes an alkyl-migration followed by a ketol-acid reduction of (S)-2-acetolactate (S2AL) to yield (R)-2,3-dihydroxy-isovalerate. In the isomerase reaction, S2AL is rearranged via a Mg-dependent methyl migration to produce 3-hydroxy-3-methyl-2-ketobutyrate (HMKB). In the reductase reaction, this 2-ketoacid undergoes a metal-dependent reduction by NADPH to yield (R)-2,3-dihydroxy-isovalerate. This chain is Ketol-acid reductoisomerase (NADP(+)), found in Mycolicibacterium gilvum (strain PYR-GCK) (Mycobacterium gilvum (strain PYR-GCK)).